The sequence spans 1530 residues: Coiled-coil domain-containing protein 141 (1530 aa).

A Spectrin repeat occupies 49–127 (NLLEIGSSQD…SMLERRRELL (79 aa)). T91 carries the phosphothreonine modification. 3 coiled-coil regions span residues 220 to 251 (IDSL…VLQL), 758 to 785 (LKEK…YEEI), and 865 to 967 (AKSL…VNKK). 4 disordered regions span residues 1153 to 1240 (SEER…PASS), 1259 to 1285 (LGKA…DTFT), 1324 to 1356 (PREV…SNVT), and 1369 to 1403 (SPGL…SVVS). Positions 1334–1345 (PSSQAQEISLGT) are enriched in polar residues. The Ig-like domain maps to 1409-1497 (PHFSRLLSNV…GTLSSKAILH (89 aa)).

Interacts with DISC1. Interacts preferentially with phosphorylated forms of myosin regulatory light chain (MRLC). Interacts (via the N-terminal region) with HDAC6; inhibits the deacetylase activity of HDAC6. Interacts with KIBRA (via the C-terminal region); retains AMPAR in the cytosol after internalization. Ubiquitinated and degradated by the CDC20-APC/C pathway. During brain development, CDC20-APC/C complex degrades CCDC141 after centrosome translocation into the dilated area. CCDC141 is restabilized in the dilation until the centrosome enters the dilation, at which point it is once again immediately destabilized by CDC20-APC/C complex. The oscillatory regulation of CCDC141 protein is needed for proper cortical migration. In terms of processing, phosphorylation at Thr-91 by PLK1 affects CCDC141 degradation.

The protein resides in the cytoplasm. The protein localises to the cytoskeleton. It localises to the microtubule organizing center. It is found in the centrosome. Plays a critical role in cortical radial and GnRH neurons migration during brain development. Regulates cortical radial migration by negatively controlling the activity of histone deacetylase 6 (HDAC6) and promotes centrosome maturation. CAMDI is required for dilation formation of cortical neurons during radial migration. Plays a critical role in learning and memory performance through regulation of AMPA-selective glutamate receptors (AMPARs) cell surface expression in competition with KIBRA. In Rattus norvegicus (Rat), this protein is Coiled-coil domain-containing protein 141.